Reading from the N-terminus, the 189-residue chain is Mitochondrial FAD-linked sulfhydryl oxidase ERV1 (189 aa).

The 101-residue stretch at 83–183 folds into the ERV/ALR sulfhydryl oxidase domain; it reads DPPDVEQLGR…FDCNFWEKRW (101 aa). FAD-binding positions include 88-95, His-99, and Tyr-128; that span reads EQLGRSSW. 2 disulfides stabilise this stretch: Cys-130-Cys-133 and Cys-159-Cys-176. FAD-binding positions include 159 to 171 and 182 to 183; these read CEAH…KLRK and RW.

In terms of assembly, homodimer. Interacts with MIA40, forming transient intermolecular disulfide bridges. FAD is required as a cofactor.

The protein localises to the mitochondrion intermembrane space. The enzyme catalyses 2 R'C(R)SH + O2 = R'C(R)S-S(R)CR' + H2O2. Its function is as follows. FAD-dependent sulfhydryl oxidase that catalyzes disulfide bond formation. Required for the import and folding of small cysteine-containing proteins in the mitochondrial intermembrane space (IMS). Forms a redox cycle with MIA40 that involves a disulfide relay system. Important for maintaining the cysteine residues in MIA40 in an oxidized state. Reduced ERV1 is reoxidized by cytochrome c. Required for the maturation of cytoplasmic, but not of mitochondrial Fe/S proteins. In Saccharomyces cerevisiae (strain ATCC 204508 / S288c) (Baker's yeast), this protein is Mitochondrial FAD-linked sulfhydryl oxidase ERV1 (ERV1).